A 170-amino-acid polypeptide reads, in one-letter code: Class I hydrophobin E (170 aa).

The signal sequence occupies residues 1-19 (MQLTTLLTGLISVLSVTTA). 4 disulfide bridges follow: C62/C126, C70/C117, C71/C105, and C127/C139.

The protein belongs to the fungal hydrophobin family.

The protein localises to the secreted. It localises to the cell wall. Its function is as follows. Aerial growth, conidiation, and dispersal of filamentous fungi in the environment rely upon a capability of their secreting small amphipathic proteins called hydrophobins (HPBs) with low sequence identity. Class I can self-assemble into an outermost layer of rodlet bundles on aerial cell surfaces, conferring cellular hydrophobicity that supports fungal growth, development and dispersal; whereas Class II form highly ordered films at water-air interfaces through intermolecular interactions but contribute nothing to the rodlet structure. In P.expansum, hydrophobins contribute to germination, tolerance to cold stress and mycotoxins patulin and citrinin production. In Penicillium expansum (Blue mold rot fungus), this protein is Class I hydrophobin E.